Reading from the N-terminus, the 236-residue chain is 2-C-methyl-D-erythritol 4-phosphate cytidylyltransferase (236 aa).

It belongs to the IspD/TarI cytidylyltransferase family. IspD subfamily. As to quaternary structure, homodimer.

It catalyses the reaction 2-C-methyl-D-erythritol 4-phosphate + CTP + H(+) = 4-CDP-2-C-methyl-D-erythritol + diphosphate. The protein operates within isoprenoid biosynthesis; isopentenyl diphosphate biosynthesis via DXP pathway; isopentenyl diphosphate from 1-deoxy-D-xylulose 5-phosphate: step 2/6. Catalyzes the formation of 4-diphosphocytidyl-2-C-methyl-D-erythritol from CTP and 2-C-methyl-D-erythritol 4-phosphate (MEP). The sequence is that of 2-C-methyl-D-erythritol 4-phosphate cytidylyltransferase from Escherichia coli O7:K1 (strain IAI39 / ExPEC).